Consider the following 289-residue polypeptide: Probable prolyl 4-hydroxylase 10 (289 aa).

A helical; Signal-anchor for type II membrane protein membrane pass occupies residues 20–40 (LVFAVLIMSTFVILILLAFGI). Topologically, residues 41–289 (LSVPSNNAGS…KWLRVHEYKV (249 aa)) are lumenal. The region spanning 161–284 (HGEGLQVLHY…KWSSTKWLRV (124 aa)) is the Fe2OG dioxygenase domain. Fe cation is bound by residues His-179 and Asp-181. Asn-220 carries N-linked (GlcNAc...) asparagine glycosylation. Residue His-265 participates in Fe cation binding. A 2-oxoglutarate-binding site is contributed by Lys-275.

This sequence belongs to the P4HA family. It depends on Fe(2+) as a cofactor. Requires L-ascorbate as cofactor.

It localises to the endoplasmic reticulum membrane. The catalysed reaction is L-prolyl-[collagen] + 2-oxoglutarate + O2 = trans-4-hydroxy-L-prolyl-[collagen] + succinate + CO2. Catalyzes the post-translational formation of 4-hydroxyproline in -Xaa-Pro-Gly- sequences in proline-rich peptide sequences of plant glycoproteins and other proteins. Hydroxyprolines are important constituent of many plant cell wall glycoproteins such as extensins, hydroxyproline-rich glycoproteins, lectins and arabinogalactan proteins. The polypeptide is Probable prolyl 4-hydroxylase 10 (Arabidopsis thaliana (Mouse-ear cress)).